A 155-amino-acid polypeptide reads, in one-letter code: 6,7-dimethyl-8-ribityllumazine synthase (155 aa).

5-amino-6-(D-ribitylamino)uracil contacts are provided by residues phenylalanine 24, 58 to 60 (AFE), and 82 to 84 (AVI). (2S)-2-hydroxy-3-oxobutyl phosphate is bound at residue 87-88 (ST). Residue histidine 90 is the Proton donor of the active site. Phenylalanine 115 provides a ligand contact to 5-amino-6-(D-ribitylamino)uracil. Arginine 129 provides a ligand contact to (2S)-2-hydroxy-3-oxobutyl phosphate.

Belongs to the DMRL synthase family.

It catalyses the reaction (2S)-2-hydroxy-3-oxobutyl phosphate + 5-amino-6-(D-ribitylamino)uracil = 6,7-dimethyl-8-(1-D-ribityl)lumazine + phosphate + 2 H2O + H(+). The protein operates within cofactor biosynthesis; riboflavin biosynthesis; riboflavin from 2-hydroxy-3-oxobutyl phosphate and 5-amino-6-(D-ribitylamino)uracil: step 1/2. Functionally, catalyzes the formation of 6,7-dimethyl-8-ribityllumazine by condensation of 5-amino-6-(D-ribitylamino)uracil with 3,4-dihydroxy-2-butanone 4-phosphate. This is the penultimate step in the biosynthesis of riboflavin. This Acetivibrio thermocellus (strain ATCC 27405 / DSM 1237 / JCM 9322 / NBRC 103400 / NCIMB 10682 / NRRL B-4536 / VPI 7372) (Clostridium thermocellum) protein is 6,7-dimethyl-8-ribityllumazine synthase.